The primary structure comprises 768 residues: Vacuolar basic amino acid transporter 4 (768 aa).

Topologically, residues 1 to 252 (MGKKDRQRKK…HDLTRRRIFS (252 aa)) are cytoplasmic. Residues 9-40 (KKLREFAKLKNRQRNLRKSVQTLKNEVQREAK) adopt a coiled-coil conformation. The disordered stretch occupies residues 34-172 (EVQREAKVPR…ELPVSSSNSF (139 aa)). A phosphoserine mark is found at Ser-62, Ser-99, and Ser-106. Positions 110–121 (KPADKANEDDLK) are enriched in basic and acidic residues. Over residues 132 to 159 (SALQSSITDFSDRSVSPLQSITSCNTPM) the composition is skewed to polar residues. Phosphoserine occurs at positions 160 and 192. The chain crosses the membrane as a helical span at residues 253–273 (SCMCTYLFFIAMDSSIILVIA). Residues 274-282 (SKIASEFHE) lie on the Vacuolar side of the membrane. A helical membrane pass occupies residues 283 to 305 (LWRLSLVISAYLLSNAIGQLVFL). Over 306 to 311 (KLSLIS) the chain is Cytoplasmic. A helical transmembrane segment spans residues 312-331 (SVKLLLCIAQFSFILGGYLS). At 332 to 334 (WSS) the chain is on the vacuolar side. Residues 335–357 (AHFWTFIFARCVTGFGGGSLIAL) traverse the membrane as a helical segment. At 358 to 375 (KSTIMNRFSQKNDSRYSL) the chain is on the cytoplasmic side. Residues 376-396 (SASMITFAMGVVIGPFMMNLF) traverse the membrane as a helical segment. Residues 397-406 (DSSHGSGWRN) are Vacuolar-facing. Residues 407–427 (AFLIPVPFCLVNASIMLADMY) traverse the membrane as a helical segment. At 428 to 447 (SVKSTLYGRPTPTLWKRFKN) the chain is on the cytoplasmic side. The chain crosses the membrane as a helical span at residues 448-468 (TLLSPDLYEILTLTLFLLCFV). Residues 469-481 (QVTSLDLTGLKNN) are Vacuolar-facing. Asn-480 carries N-linked (GlcNAc...) asparagine glycosylation. Residues 482–502 (TMIQALLFSVIIVCGILFFLI) traverse the membrane as a helical segment. The Cytoplasmic segment spans residues 503 to 522 (ETSDTYMNSVISMSLQGDKR). The chain crosses the membrane as a helical span at residues 523–543 (LIWTMIGISFCFAALMCIIPF). Residues 544-562 (GTTYFIIVLNLSTLQLAER) lie on the Vacuolar side of the membrane. Asn-553 is a glycosylation site (N-linked (GlcNAc...) asparagine). The chain crosses the membrane as a helical span at residues 563-583 (LSPFFFSIVLGYFSVSYFWKS). The Cytoplasmic portion of the chain corresponds to 584 to 587 (KGQN). Residues 588–608 (FLLKFVLSGATLLLYVALMGV) form a helical membrane-spanning segment. Residues 609-617 (SLNLPVWKQ) lie on the Vacuolar side of the membrane. A helical transmembrane segment spans residues 618-638 (YICLSLPFLGSSMILTLLSNL). Over 639-653 (YHEYHEQRKSPISGS) the chain is Cytoplasmic. Residues 654–674 (IVYCFGAVGGTVGISLGGYVF) form a helical membrane-spanning segment. Residues 675-734 (HKTLIKLMHEKVMPFSKQGYLKKDLLKIIKHATESSDWVHESAPKFVFQTLIECYLQACR) are Vacuolar-facing. Residues 735 to 755 (NVFKLSTLFFTITVVAIFIFN) form a helical membrane-spanning segment. The Cytoplasmic segment spans residues 756–768 (RIHCRSQNCLSLS).

It belongs to the major facilitator superfamily.

The protein resides in the vacuole membrane. Functionally, transporter required for vacuolar uptake of basic amino acids. This is Vacuolar basic amino acid transporter 4 (VBA4) from Saccharomyces cerevisiae (strain ATCC 204508 / S288c) (Baker's yeast).